Reading from the N-terminus, the 681-residue chain is Structure-specific endonuclease subunit SLX4 (681 aa).

Disordered regions lie at residues 239-305 (EREK…QEQL) and 505-528 (EVTGEAEDGPSIIQVPSSPGNENL). The span at 251-261 (SDSSPEPTQLL) shows a compositional bias: polar residues. Positions 265 to 281 (IIEEEHEVDEEEEDNEN) are enriched in acidic residues. Polar residues-rich tracts occupy residues 288–305 (QLASSPTQISSDDTQEQL) and 518–528 (QVPSSPGNENL).

This sequence belongs to the SLX4 family. As to quaternary structure, forms a heterodimer with SLX1. In terms of processing, phosphorylated in response to DNA damage.

The protein localises to the nucleus. Functionally, regulatory subunit of the SLX1-SLX4 structure-specific endonuclease that resolves DNA secondary structures generated during DNA repair and recombination. Has endonuclease activity towards branched DNA substrates, introducing single-strand cuts in duplex DNA close to junctions with ss-DNA. This chain is Structure-specific endonuclease subunit SLX4, found in Meyerozyma guilliermondii (strain ATCC 6260 / CBS 566 / DSM 6381 / JCM 1539 / NBRC 10279 / NRRL Y-324) (Yeast).